We begin with the raw amino-acid sequence, 132 residues long: Small ribosomal subunit protein uS8 (132 aa).

Belongs to the universal ribosomal protein uS8 family. In terms of assembly, part of the 30S ribosomal subunit. Contacts proteins S5 and S12.

One of the primary rRNA binding proteins, it binds directly to 16S rRNA central domain where it helps coordinate assembly of the platform of the 30S subunit. The polypeptide is Small ribosomal subunit protein uS8 (Borreliella afzelii (strain PKo) (Borrelia afzelii)).